Consider the following 186-residue polypeptide: Elongation factor P (186 aa).

The protein belongs to the elongation factor P family.

The protein localises to the cytoplasm. Its pathway is protein biosynthesis; polypeptide chain elongation. Its function is as follows. Involved in peptide bond synthesis. Stimulates efficient translation and peptide-bond synthesis on native or reconstituted 70S ribosomes in vitro. Probably functions indirectly by altering the affinity of the ribosome for aminoacyl-tRNA, thus increasing their reactivity as acceptors for peptidyl transferase. This chain is Elongation factor P, found in Streptococcus mutans serotype c (strain ATCC 700610 / UA159).